The following is a 396-amino-acid chain: MGKAKFERNKPHVNIGTIGHVDHGKTTLTAAITITLAKTGGATAKNYADIDAAPEEKARGITINTAHVEYETPARHYAHVDCPGHADYVKNMITGAAQMDGAILVCSAADGPMPQTREHILLARQVGVPALVVFLNKVDMVDDEELLELVEMEVRELLSSYNFPGDDIPIIKGSALAAVEDRNPEIGQERILELMAAVDEYIPTPERPLDKPFLMPVEDVFSISGRGTVVTGRVEQGIVKVGEEIEIVGIRPTVKTTCTGVEMFRKLLDQGQAGDNIGALLRGVDREGVERGQVLCKPGSITPHTLFEAEAYILTKEEGGRHTPFFTNYRPQFYFRTTDVTGIVKLPEDKEMVLPGDNVKMDVELINPIAMDKGLRFAIREGGRTVGAGVVSEIKK.

Residues 10–206 form the tr-type G domain; sequence KPHVNIGTIG…AVDEYIPTPE (197 aa). Positions 19 to 26 are G1; that stretch reads GHVDHGKT. 19-26 contacts GTP; it reads GHVDHGKT. Threonine 26 provides a ligand contact to Mg(2+). The segment at 60 to 64 is G2; sequence GITIN. A G3 region spans residues 81 to 84; that stretch reads DCPG. Residues 81-85 and 136-139 each bind GTP; these read DCPGH and NKVD. Residues 136–139 are G4; sequence NKVD. A G5 region spans residues 174-176; it reads SAL.

The protein belongs to the TRAFAC class translation factor GTPase superfamily. Classic translation factor GTPase family. EF-Tu/EF-1A subfamily. As to quaternary structure, monomer.

It is found in the cytoplasm. The enzyme catalyses GTP + H2O = GDP + phosphate + H(+). GTP hydrolase that promotes the GTP-dependent binding of aminoacyl-tRNA to the A-site of ribosomes during protein biosynthesis. This is Elongation factor Tu 1 from Hyphomonas neptunium (strain ATCC 15444).